Reading from the N-terminus, the 112-residue chain is Large ribosomal subunit protein uL22 (112 aa).

Belongs to the universal ribosomal protein uL22 family. In terms of assembly, part of the 50S ribosomal subunit.

Its function is as follows. This protein binds specifically to 23S rRNA; its binding is stimulated by other ribosomal proteins, e.g. L4, L17, and L20. It is important during the early stages of 50S assembly. It makes multiple contacts with different domains of the 23S rRNA in the assembled 50S subunit and ribosome. Functionally, the globular domain of the protein is located near the polypeptide exit tunnel on the outside of the subunit, while an extended beta-hairpin is found that lines the wall of the exit tunnel in the center of the 70S ribosome. This chain is Large ribosomal subunit protein uL22, found in Moorella thermoacetica (strain ATCC 39073 / JCM 9320).